Reading from the N-terminus, the 87-residue chain is Protein WFDC11 (87 aa).

Positions 1 to 25 (MVSLMKLWIPMLMTFFCTVLLSVLG) are cleaved as a signal peptide.

It is found in the secreted. This chain is Protein WFDC11 (WFDC11), found in Homo sapiens (Human).